Here is a 596-residue protein sequence, read N- to C-terminus: RNA-binding protein involved in heterochromatin assembly dri1 (596 aa).

S176 bears the Phosphoserine mark. In terms of domain architecture, RRM spans 236–314; that stretch reads KIVHVAGLTN…RMLEIIPSST (79 aa). The segment at 335 to 364 adopts a RanBP2-type 1 zinc-finger fold; that stretch reads RPGDWNCPMCGFSNFQRRTSCFRCSFPGPT. S429 is subject to Phosphoserine. RanBP2-type zinc fingers lie at residues 437-468 and 552-580; these read RAGD…SRAT and DQGD…PHYS.

In terms of assembly, interacts with dpb4. Interacts with chp1.

The protein resides in the chromosome. It localises to the nucleus. It is found in the cytoplasm. The protein localises to the cytoplasmic granule. Mediates heterochromatin assembly by promoting RNAi-mediated heterochromatin silencing and histone deacetylation. Binds pericetromeric transcripts and recruits the RNA-induced transcriptional silencing (RITS) complex to heterochromatin. Recruits sir2 to chromatin to promote deacetylation of 'Lys-9' of histone H3. Involved in bipolar spindle assembly during mitosis. Required for proper localization of kinesin-14/Klp2 on the spindle microtubules. This chain is RNA-binding protein involved in heterochromatin assembly dri1, found in Schizosaccharomyces pombe (strain 972 / ATCC 24843) (Fission yeast).